The sequence spans 283 residues: Thymidylate synthase (283 aa).

Arginine 22 contacts dUMP. Cysteine 160 functions as the Nucleophile in the catalytic mechanism. DUMP is bound by residues arginine 180–aspartate 183, asparagine 191, and histidine 221–tyrosine 223. Aspartate 183 contributes to the (6R)-5,10-methylene-5,6,7,8-tetrahydrofolate binding site. Serine 282 is a (6R)-5,10-methylene-5,6,7,8-tetrahydrofolate binding site.

It belongs to the thymidylate synthase family. Bacterial-type ThyA subfamily. As to quaternary structure, homodimer.

It is found in the cytoplasm. The catalysed reaction is dUMP + (6R)-5,10-methylene-5,6,7,8-tetrahydrofolate = 7,8-dihydrofolate + dTMP. It participates in pyrimidine metabolism; dTTP biosynthesis. In terms of biological role, catalyzes the reductive methylation of 2'-deoxyuridine-5'-monophosphate (dUMP) to 2'-deoxythymidine-5'-monophosphate (dTMP) while utilizing 5,10-methylenetetrahydrofolate (mTHF) as the methyl donor and reductant in the reaction, yielding dihydrofolate (DHF) as a by-product. This enzymatic reaction provides an intracellular de novo source of dTMP, an essential precursor for DNA biosynthesis. The chain is Thymidylate synthase from Haemophilus influenzae (strain ATCC 51907 / DSM 11121 / KW20 / Rd).